The chain runs to 500 residues: L-arabinose isomerase (500 aa).

Glu306, Glu333, His350, and His450 together coordinate Mn(2+).

The protein belongs to the arabinose isomerase family. As to quaternary structure, homohexamer. Mn(2+) is required as a cofactor.

The catalysed reaction is beta-L-arabinopyranose = L-ribulose. The protein operates within carbohydrate degradation; L-arabinose degradation via L-ribulose; D-xylulose 5-phosphate from L-arabinose (bacterial route): step 1/3. Functionally, catalyzes the conversion of L-arabinose to L-ribulose. The polypeptide is L-arabinose isomerase (Klebsiella pneumoniae subsp. pneumoniae (strain ATCC 700721 / MGH 78578)).